The sequence spans 564 residues: Bicarbonate transporter BicA (564 aa).

At 1–11 (MQITNKIHFRN) the chain is on the cytoplasmic side. A helical membrane pass occupies residues 12–37 (LQGDLFGGVTAAVIALPMALAFGIAS). The Periplasmic segment spans residues 38-40 (GAG). The helical transmembrane segment at 41–58 (ATAGLWGAVIVGFFAALF) threads the bilayer. Residues 59–70 (GGTPTLISEPTG) lie on the Cytoplasmic side of the membrane. Residue T69 coordinates hydrogencarbonate. A helical membrane pass occupies residues 71-86 (PMTVVQTAVIASLVAA). Over 87–90 (DPDN) the chain is Periplasmic. The chain crosses the membrane as a helical span at residues 91-112 (GLAMAFTVVMMAGLFQIAFGLL). Topologically, residues 113 to 122 (KLGKYVTMMP) are cytoplasmic. The chain crosses the membrane as a helical span at residues 123–145 (YTVISGFMSGIGIILVILQLAPF). Topologically, residues 146-170 (LGQASPKGGVIGTLQALPNLVSNVR) are periplasmic. The chain crosses the membrane as a helical span at residues 171 to 185 (PVETLLALMTVGIIW). The Cytoplasmic segment spans residues 186 to 196 (FMPSRWKKFAP). A helical membrane pass occupies residues 197–211 (PQLVALVLGTIISIT). Residues 212 to 240 (LFGDLDIRRIGEIQAGLPALQLPVFQADQ) are Periplasmic-facing. The helical transmembrane segment at 241-269 (LQRMLIDAAVLGMLGCIDALLTSVVADSL) threads the bilayer. The Na(+) site is built by D258 and T262. Residues 270 to 275 (TRTEHN) are Cytoplasmic-facing. A helical transmembrane segment spans residues 276–292 (SNKELVGQGIGNVMSGL). Residues 293–302 (FGGLGGAGAT) are Periplasmic-facing. Na(+) is bound at residue G300. A301 provides a ligand contact to hydrogencarbonate. Residue T302 participates in Na(+) binding. Residues 303–312 (MGTVVNIQSG) form a helical membrane-spanning segment. Over 313-315 (GRT) the chain is Cytoplasmic. Residues 316-338 (ALSGLIRAMVLLVVILGAAKLAA) form a helical membrane-spanning segment. Over 339 to 341 (TIP) the chain is Periplasmic. A helical transmembrane segment spans residues 342–357 (LAVLAGIAFKVGVDII). At 358–369 (DWGFLKRAHHVS) the chain is on the cytoplasmic side. The chain crosses the membrane as a helical span at residues 370-390 (IKGALIMYAVIVLTVLVDLIA). Topologically, residues 391–392 (AV) are periplasmic. The chain crosses the membrane as a helical span at residues 393–405 (GIGVFIANILTID). Over 406–564 (RMSALQSKAV…PSSSSVQTTY (159 aa)) the chain is Cytoplasmic. The STAS domain maps to 432–542 (KRWLDEGNGR…DDRSEALKDA (111 aa)).

It belongs to the SLC26A/SulP transporter (TC 2.A.53) family. In terms of assembly, forms homodimers through the STAS cytoplasmic domain.

The protein localises to the cell inner membrane. In terms of biological role, low affinity, high-flux Na(+)-dependent bicarbonate transporter. Involved in carbone dioxide-concentrating mechanisms (CCMs) that accumulate CO(2) and improve photosynthetic carbon fixation. The sequence is that of Bicarbonate transporter BicA from Synechocystis sp. (strain ATCC 27184 / PCC 6803 / Kazusa).